The sequence spans 221 residues: NAD(P)H-hydrate epimerase (221 aa).

Residues 10–211 (MQQYDQYTIN…DIGIYSPAEL (202 aa)) form the YjeF N-terminal domain. 58-62 (NNGGD) contacts (6S)-NADPHX. Positions 59 and 121 each coordinate K(+). (6S)-NADPHX-binding positions include 125 to 131 (GIGLSKP) and Asp154. K(+) is bound at residue Ser157.

The protein belongs to the NnrE/AIBP family. K(+) is required as a cofactor.

It catalyses the reaction (6R)-NADHX = (6S)-NADHX. It carries out the reaction (6R)-NADPHX = (6S)-NADPHX. Its function is as follows. Catalyzes the epimerization of the S- and R-forms of NAD(P)HX, a damaged form of NAD(P)H that is a result of enzymatic or heat-dependent hydration. This is a prerequisite for the S-specific NAD(P)H-hydrate dehydratase to allow the repair of both epimers of NAD(P)HX. This is NAD(P)H-hydrate epimerase from Weissella koreensis (strain KACC 15510).